Here is a 113-residue protein sequence, read N- to C-terminus: Putative pterin-4-alpha-carbinolamine dehydratase (113 aa).

The protein belongs to the pterin-4-alpha-carbinolamine dehydratase family.

The catalysed reaction is (4aS,6R)-4a-hydroxy-L-erythro-5,6,7,8-tetrahydrobiopterin = (6R)-L-erythro-6,7-dihydrobiopterin + H2O. In Nitrosococcus oceani (strain ATCC 19707 / BCRC 17464 / JCM 30415 / NCIMB 11848 / C-107), this protein is Putative pterin-4-alpha-carbinolamine dehydratase.